The following is a 689-amino-acid chain: Elongation factor G (689 aa).

Residues 8–282 (LNTRNIGIMA…AVVDYLPSPL (275 aa)) enclose the tr-type G domain. GTP-binding positions include 17–24 (AHIDAGKT), 81–85 (DTPGH), and 135–138 (NKMD).

Belongs to the TRAFAC class translation factor GTPase superfamily. Classic translation factor GTPase family. EF-G/EF-2 subfamily.

The protein localises to the cytoplasm. Functionally, catalyzes the GTP-dependent ribosomal translocation step during translation elongation. During this step, the ribosome changes from the pre-translocational (PRE) to the post-translocational (POST) state as the newly formed A-site-bound peptidyl-tRNA and P-site-bound deacylated tRNA move to the P and E sites, respectively. Catalyzes the coordinated movement of the two tRNA molecules, the mRNA and conformational changes in the ribosome. The polypeptide is Elongation factor G (Mycoplasma mycoides subsp. mycoides SC (strain CCUG 32753 / NCTC 10114 / PG1)).